The primary structure comprises 978 residues: MSTTSVQHFAPSYPPFSSGLSSNRMAQSQTPGLDTLAEGSQYALEQLQLSREAAAGDTTATAASGPSDPMSKSKDPYDFDHHNHNHHNHHNNNHHPNSNSNNSLPGFKNPAQRDPLAEARSAIRKNSSSAPVRRRISRACDQCNQLRTRCDGQNPCAHCIEFGLTCEYARERKKRGKASKKDLAAAAAAATATPGQPNENPGKDSGTMVGGHSPPDRRQELNGRYDPAFDAARNLSGSAQPQLPHAEGPGMVGMPNTQHLPSPSQPPMGGGLEGLPMNGYNGLNDSNRPPIPVSELQSLHMLHSSNPHPRSPPSILPSQRYNGGYNENAYSLMNPQEHNPTPMNQFRLGNSTENPPNTFLGLSPPAQSPGWLPLPSPSPANFPSFSMASFSTTLRYPVLHPVLPHIASIIPQSLACDLLDVYFTSSSSSHLSPQSPYVVGYIFRKQSFLHPTKPRACSPGLLASMLWVAAQTSDAPFLTSPPSARGRVCQKLLELTVGLLRPLIHGPAPGETSPNYAANMVINGIALGGFGVSMDQLGAQSSATGAVDDVATYVHLATVISASEYKAASMRWWTAAWSLARELKLGRELPPNTSQTRQDGERENDPDADPSNRHSPSLITAMGHGPGNTVINVTEDEREERRRLWWLLYATDRHLALCYNRPLTLLDKECNGLLQPMNDDLWQASDFASASYRQAGPPLECSGHSMFGYFLPLMTILGEIIDLQQARNHPRFGLAFRGSPECDAQVLEIARQLDLYAQTLKEFETRYTSGLALGAADNDTAMEGSHLNHVSPSGRSSSTVDSRVNESIVHTKMVVAYGTHIMHVLHILLAGKWDPINLLDDNDLWISSESFIAAMGHAVGAAEAAADILEYDPDLSFMPFFFGIYLLQGSFLLLLTADKLQGDASPSVVRACETIVRAHEACVVTLNTEYQRTFRKVMRSALAQVRGRLPEDFGEQQQRRREVLALYRWTGDGSGLAL.

Disordered stretches follow at residues 1-39 (MSTT…LAEG) and 53-116 (AAAG…RDPL). Polar residues predominate over residues 18-32 (SGLSSNRMAQSQTPG). A compositionally biased stretch (low complexity) spans 53-69 (AAAGDTTATAASGPSDP). Over residues 71-82 (SKSKDPYDFDHH) the composition is skewed to basic and acidic residues. Residues 83–93 (NHNHHNHHNNN) show a composition bias toward basic residues. Positions 94–103 (HHPNSNSNNS) are enriched in low complexity. A DNA-binding region (zn(2)-C6 fungal-type) is located at residues 140 to 166 (CDQCNQLRTRCDGQNPCAHCIEFGLTC). 3 disordered regions span residues 179–223 (SKKD…ELNG), 238–293 (SAQP…PIPV), and 588–629 (ELPP…PGNT). Residues 184-193 (AAAAAAATAT) are compositionally biased toward low complexity. Residues 214–223 (PPDRRQELNG) are compositionally biased toward basic and acidic residues.

The protein belongs to the xlnR/xlr1 family.

It localises to the nucleus. Transcriptional activator of the xylanolytic system. Involved in the regulation of extracellular cellulolytic and xylanolytic genes and in the regulation of the intracellular activities of D-xylose catabolic genes in the pentose catabolic pathway (PCP) in response to the presence of D-xylose. The polypeptide is Xylanolytic transcriptional activator xlnR (xlnR) (Aspergillus clavatus (strain ATCC 1007 / CBS 513.65 / DSM 816 / NCTC 3887 / NRRL 1 / QM 1276 / 107)).